Here is a 299-residue protein sequence, read N- to C-terminus: Urease accessory protein UreD (299 aa).

It belongs to the UreD family. UreD, UreF and UreG form a complex that acts as a GTP-hydrolysis-dependent molecular chaperone, activating the urease apoprotein by helping to assemble the nickel containing metallocenter of UreC. The UreE protein probably delivers the nickel.

It localises to the cytoplasm. Functionally, required for maturation of urease via the functional incorporation of the urease nickel metallocenter. This is Urease accessory protein UreD from Natronomonas pharaonis (strain ATCC 35678 / DSM 2160 / CIP 103997 / JCM 8858 / NBRC 14720 / NCIMB 2260 / Gabara) (Halobacterium pharaonis).